A 133-amino-acid polypeptide reads, in one-letter code: Carbohydrate-binding protein AWN (133 aa).

Position 1 is an N-acetylalanine (alanine 1). 2 cysteine pairs are disulfide-bonded: cysteine 9–cysteine 30 and cysteine 53–cysteine 74. The 102-residue stretch at 9–110 (CGGVLRDPPG…SPFHIYYYAD (102 aa)) folds into the CUB domain. The tract at residues 73 to 110 (ICGGISLVFRSSSNIATIKYLRTSGQRASPFHIYYYAD) is heparin-binding.

Belongs to the spermadhesin family.

The protein localises to the secreted. Its function is as follows. Mediates the binding of spermatozoa to component(s) of the egg's zona pellucida by a carbohydrate-binding mechanism. It is a secretory component of the male accessory glands being coated to the sperm surface at the time of ejaculation. This chain is Carbohydrate-binding protein AWN, found in Equus caballus (Horse).